The sequence spans 130 residues: uncharacterized protein (130 aa).

The tract at residues 1–62 (MRMYSSDAHE…ASGVGSSCKR (62 aa)) is disordered. The segment covering 21 to 30 (PPHPLPPTGS) has biased composition (pro residues).

This is an uncharacterized protein from Homo sapiens (Human).